The chain runs to 391 residues: DNA-directed RNA polymerase subunit Rpo1C (391 aa).

The protein belongs to the RNA polymerase beta' chain family. As to quaternary structure, part of the RNA polymerase complex.

It localises to the cytoplasm. The enzyme catalyses RNA(n) + a ribonucleoside 5'-triphosphate = RNA(n+1) + diphosphate. In terms of biological role, DNA-dependent RNA polymerase (RNAP) catalyzes the transcription of DNA into RNA using the four ribonucleoside triphosphates as substrates. Forms part of the jaw domain. The chain is DNA-directed RNA polymerase subunit Rpo1C from Thermococcus onnurineus (strain NA1).